The sequence spans 308 residues: tRNA pseudouridine synthase B (308 aa).

The Nucleophile role is filled by Asp-47.

Belongs to the pseudouridine synthase TruB family. Type 1 subfamily.

The enzyme catalyses uridine(55) in tRNA = pseudouridine(55) in tRNA. Functionally, responsible for synthesis of pseudouridine from uracil-55 in the psi GC loop of transfer RNAs. This chain is tRNA pseudouridine synthase B, found in Xanthomonas euvesicatoria pv. vesicatoria (strain 85-10) (Xanthomonas campestris pv. vesicatoria).